An 82-amino-acid polypeptide reads, in one-letter code: Small ribosomal subunit protein bS16 (82 aa).

It belongs to the bacterial ribosomal protein bS16 family.

This Caldanaerobacter subterraneus subsp. tengcongensis (strain DSM 15242 / JCM 11007 / NBRC 100824 / MB4) (Thermoanaerobacter tengcongensis) protein is Small ribosomal subunit protein bS16.